The sequence spans 229 residues: Potassium/proton antiporter CemA (229 aa).

4 helical membrane passes run 7-27, 114-134, 154-174, and 189-209; these read FTPLPYLASIVFLPWWISLSF, ITCFAILSGYSILGNEELVIL, ILLLTDLCIGFHSPHGWELMI, and IISGLVSTFPVILDTIFKYWI.

The protein belongs to the CemA family.

The protein localises to the plastid. It is found in the chloroplast inner membrane. It carries out the reaction K(+)(in) + H(+)(out) = K(+)(out) + H(+)(in). Functionally, contributes to K(+)/H(+) antiport activity by supporting proton efflux to control proton extrusion and homeostasis in chloroplasts in a light-dependent manner to modulate photosynthesis. Prevents excessive induction of non-photochemical quenching (NPQ) under continuous-light conditions. Indirectly promotes efficient inorganic carbon uptake into chloroplasts. The sequence is that of Potassium/proton antiporter CemA from Platanus occidentalis (Sycamore).